The primary structure comprises 144 residues: Major allergen Blo t 12 (144 aa).

Positions 1-20 are cleaved as a signal peptide; sequence MKSVLIFLVAIALFSANIVS. The interval 24–77 is disordered; that stretch reads QTTRGRHTEPDDHHEKPTTQCTHEETTSTQHHHEEVVTTQTPHHEEKTTTEETH. The 53-residue stretch at 92-144 folds into the Chitin-binding type-2 domain; it reads HVVCHEEGPIHIQEMCNKYIICSKSGSLWYITVMPCSIGTKFDPISRNCVLDN. Cysteine 127 and cysteine 140 are oxidised to a cystine.

The sequence is that of Major allergen Blo t 12 from Blomia tropicalis (Mite).